The primary structure comprises 396 residues: Formate-dependent phosphoribosylglycinamide formyltransferase (396 aa).

Residues 25–26 and glutamate 85 each bind N(1)-(5-phospho-beta-D-ribosyl)glycinamide; that span reads EL. ATP is bound by residues arginine 117, lysine 158, 163 to 168, 198 to 201, and glutamate 206; these read SSGKGQ and EAFI. In terms of domain architecture, ATP-grasp spans 122-311; it reads RLAAETLAIP…EFALHVRAIL (190 aa). Positions 270 and 282 each coordinate Mg(2+). Residues aspartate 289, lysine 359, and 366 to 367 each bind N(1)-(5-phospho-beta-D-ribosyl)glycinamide; that span reads RR.

Belongs to the PurK/PurT family. Homodimer.

It carries out the reaction N(1)-(5-phospho-beta-D-ribosyl)glycinamide + formate + ATP = N(2)-formyl-N(1)-(5-phospho-beta-D-ribosyl)glycinamide + ADP + phosphate + H(+). It functions in the pathway purine metabolism; IMP biosynthesis via de novo pathway; N(2)-formyl-N(1)-(5-phospho-D-ribosyl)glycinamide from N(1)-(5-phospho-D-ribosyl)glycinamide (formate route): step 1/1. In terms of biological role, involved in the de novo purine biosynthesis. Catalyzes the transfer of formate to 5-phospho-ribosyl-glycinamide (GAR), producing 5-phospho-ribosyl-N-formylglycinamide (FGAR). Formate is provided by PurU via hydrolysis of 10-formyl-tetrahydrofolate. This Shewanella frigidimarina (strain NCIMB 400) protein is Formate-dependent phosphoribosylglycinamide formyltransferase.